The primary structure comprises 974 residues: Ephrin type-B receptor 3 (974 aa).

An N-terminal signal peptide occupies residues 1 to 16 (MLPAVFVILALSAVQG). Topologically, residues 17–534 (LEETLMDTKW…RSSLQEQVPM (518 aa)) are extracellular. Positions 18–196 (EETLMDTKWT…FFKKCPRTTA (179 aa)) constitute an Eph LBD domain. Cysteines 60 and 178 form a disulfide. Fibronectin type-III domains are found at residues 318 to 426 (VPSA…TNQA) and 427 to 522 (APSS…IAED). N-linked (GlcNAc...) asparagine glycans are attached at residues N330 and N420. A helical transmembrane segment spans residues 535 to 555 (VVGSVTAGLIFIIAVVIIVIV). The Cytoplasmic portion of the chain corresponds to 556 to 974 (CFSRKQRNDS…QMSQTLPVQV (419 aa)). A Phosphotyrosine; by autocatalysis modification is found at Y590. The 264-residue stretch at 609–872 (VKIEEVIGAG…QIVSSLDKLI (264 aa)) folds into the Protein kinase domain. ATP is bound by residues 615 to 623 (IGAGEFGEV) and K641. Residue D734 is the Proton acceptor of the active site. One can recognise an SAM domain in the interval 901–965 (TTFPTVSDWL…LNSVQDMRLQ (65 aa)). The PDZ-binding signature appears at 972-974 (VQV).

This sequence belongs to the protein kinase superfamily. Tyr protein kinase family. Ephrin receptor subfamily. Heterotetramer upon binding of the ligand. The heterotetramer is composed of an ephrin dimer and a receptor dimer. Oligomerization is probably required to induce biological responses. Post-translationally, phosphorylated. Autophosphorylates upon ligand-binding. Autophosphorylation on Tyr-590 is required for interaction with SH2 domain-containing proteins. As to expression, expressed in the embryo in pre-somitic mesoderm, caudal somites, midbrain, and cement gland. Most abundant in adult brain, eye, heart, lung and ovary. Lower levels in intestine, kidney, oviduct and pharynx.

The protein resides in the cell membrane. It is found in the cell projection. It localises to the dendrite. It carries out the reaction L-tyrosyl-[protein] + ATP = O-phospho-L-tyrosyl-[protein] + ADP + H(+). Its function is as follows. Receptor tyrosine kinase which binds promiscuously transmembrane ephrin-B family ligands residing on adjacent cells, leading to contact-dependent bidirectional signaling into neighboring cells. The signaling pathway downstream of the receptor is referred to as forward signaling while the signaling pathway downstream of the ephrin ligand is referred to as reverse signaling. Generally has an overlapping and redundant function with EPHB2. Like EPHB2, functions in axon guidance during development. In addition to its role in axon guidance also plays an important redundant role with other ephrin-B receptors in development and maturation of dendritic spines and the formation of excitatory synapses. May control other aspects of development through regulation of cell migration and positioning. The protein is Ephrin type-B receptor 3 (ephb3) of Xenopus laevis (African clawed frog).